Consider the following 553-residue polypeptide: Chaperonin GroEL (553 aa).

Residues 29-32, K50, 86-90, G424, and D504 each bind ATP; these read TLGP and DGTTT.

It belongs to the chaperonin (HSP60) family. In terms of assembly, forms a cylinder of 14 subunits composed of two heptameric rings stacked back-to-back. Interacts with the co-chaperonin GroES.

It localises to the cytoplasm. It catalyses the reaction ATP + H2O + a folded polypeptide = ADP + phosphate + an unfolded polypeptide.. Functionally, together with its co-chaperonin GroES, plays an essential role in assisting protein folding. The GroEL-GroES system forms a nano-cage that allows encapsulation of the non-native substrate proteins and provides a physical environment optimized to promote and accelerate protein folding. The protein is Chaperonin GroEL of Koribacter versatilis (strain Ellin345).